The sequence spans 120 residues: Flagellar protein FliT (120 aa).

The interval 1–50 is required for homodimerization; that stretch reads MTNFIPSLTDWHALHALSITMLDLAHSGKWDELIEQEMNYVQLVEGIARN. The interval 59 to 97 is fliD binding; that stretch reads LINQAKEILNAVLRNEAELKTLLQHRMEELRQLIDQTGK.

This sequence belongs to the FliT family. Homodimer. Interacts with FliD and FlhC.

The protein resides in the cytoplasm. It localises to the cytosol. Its function is as follows. Dual-function protein that regulates the transcription of class 2 flagellar operons and that also acts as an export chaperone for the filament-capping protein FliD. As a transcriptional regulator, acts as an anti-FlhDC factor; it directly binds FlhC, thus inhibiting the binding of the FlhC/FlhD complex to class 2 promoters, resulting in decreased expression of class 2 flagellar operons. As a chaperone, effects FliD transition to the membrane by preventing its premature polymerization, and by directing it to the export apparatus. The chain is Flagellar protein FliT from Citrobacter koseri (strain ATCC BAA-895 / CDC 4225-83 / SGSC4696).